The primary structure comprises 405 residues: L-rhamnonate dehydratase (405 aa).

Substrate is bound by residues H33 and R59. Residues D226, E252, and E280 each contribute to the Mg(2+) site. The Proton acceptor role is filled by H329. Substrate is bound at residue E349.

Belongs to the mandelate racemase/muconate lactonizing enzyme family. RhamD subfamily. Homooctamer; tetramer of dimers. Mg(2+) serves as cofactor.

It carries out the reaction L-rhamnonate = 2-dehydro-3-deoxy-L-rhamnonate + H2O. Catalyzes the dehydration of L-rhamnonate to 2-keto-3-deoxy-L-rhamnonate (KDR). The chain is L-rhamnonate dehydratase from Escherichia coli O127:H6 (strain E2348/69 / EPEC).